Here is a 195-residue protein sequence, read N- to C-terminus: ATP-dependent Clp protease proteolytic subunit (195 aa).

The Nucleophile role is filled by serine 101. Residue histidine 126 is part of the active site.

This sequence belongs to the peptidase S14 family. In terms of assembly, component of the chloroplastic Clp protease core complex.

It is found in the plastid. Its subcellular location is the chloroplast stroma. The catalysed reaction is Hydrolysis of proteins to small peptides in the presence of ATP and magnesium. alpha-casein is the usual test substrate. In the absence of ATP, only oligopeptides shorter than five residues are hydrolyzed (such as succinyl-Leu-Tyr-|-NHMec, and Leu-Tyr-Leu-|-Tyr-Trp, in which cleavage of the -Tyr-|-Leu- and -Tyr-|-Trp bonds also occurs).. Functionally, cleaves peptides in various proteins in a process that requires ATP hydrolysis. Has a chymotrypsin-like activity. Plays a major role in the degradation of misfolded proteins. This is ATP-dependent Clp protease proteolytic subunit from Cucumis sativus (Cucumber).